The chain runs to 422 residues: Inhibitor of growth protein 1 (422 aa).

The segment at 261-349 is disordered; that stretch reads ELGDTAGNSG…EASPADLPID (89 aa). Lysine 278 is covalently cross-linked (Glycyl lysine isopeptide (Lys-Gly) (interchain with G-Cter in SUMO2)). A compositionally biased stretch (basic and acidic residues) spans 297–314; the sequence is RNNENRENASSNHDHDDG. Residues 322-334 show a composition bias toward basic residues; it reads KKAKTSKKKKRSK. The segment at 353–402 adopts a PHD-type zinc-finger fold; that stretch reads PTYCLCNQVSYGEMIGCDNDECPIEWFHFSCVGLNHKPKGKWYCPKCRGE. 8 residues coordinate Zn(2+): cysteine 356, cysteine 358, cysteine 369, cysteine 374, histidine 380, cysteine 383, cysteine 396, and cysteine 399. The segment at 405-422 is PBR; that stretch reads KTMDKALEKSKKERAYNR.

This sequence belongs to the ING family. Interacts with H3K4me3 and to a lesser extent with H3K4me2. Interacts with TP53. Isoform 2 interacts with RSL1D1. Isoform 2 was expressed in all normal tissues and cells examined, as well as in all breast cancer and melanoma cell lines examined. Isoform 3 was expressed in testis, liver, and kidney, weakly expressed in colon and brain and not expressed in breast and cultured melanocytes. Isoform 4 was highly expressed in testis and weakly expressed in brain, but not expressed in breast, colon, kidney, melanocytes, breast cancer or melanoma cell lines.

It localises to the nucleus. Cooperates with p53/TP53 in the negative regulatory pathway of cell growth by modulating p53-dependent transcriptional activation. Implicated as a tumor suppressor gene. The polypeptide is Inhibitor of growth protein 1 (ING1) (Homo sapiens (Human)).